Reading from the N-terminus, the 192-residue chain is Inosine triphosphate pyrophosphatase (192 aa).

Residue 10–15 coordinates ITP; that stretch reads TGNANK. E46 lines the Mg(2+) pocket. Residues K58, 74–75, K91, 149–152, K172, and 177–178 contribute to the ITP site; these read DT, FGWD, and HR.

It belongs to the HAM1 NTPase family. Homodimer. The cofactor is Mg(2+). Mn(2+) serves as cofactor.

It is found in the cytoplasm. Its subcellular location is the nucleus. The enzyme catalyses ITP + H2O = IMP + diphosphate + H(+). The catalysed reaction is dITP + H2O = dIMP + diphosphate + H(+). It carries out the reaction XTP + H2O = XMP + diphosphate + H(+). Its function is as follows. Pyrophosphatase that hydrolyzes non-canonical purine nucleotides such as inosine triphosphate (ITP), deoxyinosine triphosphate (dITP) or xanthosine 5'-triphosphate (XTP) to their respective monophosphate derivatives. The enzyme does not distinguish between the deoxy- and ribose forms. Probably excludes non-canonical purines from RNA and DNA precursor pools, thus preventing their incorporation into RNA and DNA and avoiding chromosomal lesions. This is Inosine triphosphate pyrophosphatase from Puccinia graminis f. sp. tritici (strain CRL 75-36-700-3 / race SCCL) (Black stem rust fungus).